The sequence spans 349 residues: uncharacterized protein (349 aa).

This is an uncharacterized protein from Ostreid herpesvirus 1 (isolate France) (OsHV-1).